The sequence spans 179 residues: ATP synthase subunit b (179 aa).

The chain crosses the membrane as a helical span at residues T27 to V47.

It belongs to the ATPase B chain family. As to quaternary structure, F-type ATPases have 2 components, F(1) - the catalytic core - and F(0) - the membrane proton channel. F(1) has five subunits: alpha(3), beta(3), gamma(1), delta(1), epsilon(1). F(0) has three main subunits: a(1), b(2) and c(10-14). The alpha and beta chains form an alternating ring which encloses part of the gamma chain. F(1) is attached to F(0) by a central stalk formed by the gamma and epsilon chains, while a peripheral stalk is formed by the delta and b chains.

The protein resides in the cell inner membrane. Functionally, f(1)F(0) ATP synthase produces ATP from ADP in the presence of a proton or sodium gradient. F-type ATPases consist of two structural domains, F(1) containing the extramembraneous catalytic core and F(0) containing the membrane proton channel, linked together by a central stalk and a peripheral stalk. During catalysis, ATP synthesis in the catalytic domain of F(1) is coupled via a rotary mechanism of the central stalk subunits to proton translocation. Component of the F(0) channel, it forms part of the peripheral stalk, linking F(1) to F(0). The protein is ATP synthase subunit b of Anaeromyxobacter dehalogenans (strain 2CP-C).